A 110-amino-acid chain; its full sequence is Transcription factor S (110 aa).

8 residues coordinate Zn(2+): Cys4, Cys7, Cys22, Cys25, Cys71, Cys74, Cys99, and Cys102. The segment at 67–107 (TKVTCPKCGNDTAYWWEMQTRAGDEPSTIFYKCTKCGYTWR) adopts a TFIIS-type zinc-finger fold.

Belongs to the archaeal rpoM/eukaryotic RPA12/RPB9/RPC11 RNA polymerase family.

The protein localises to the chromosome. Involved in transcriptional proofreading and fidelity. Induces RNA cleavage activity in RNA polymerase (RNAP). Stimulates transcription elongation by RNAP on both naked DNA and histone-bound DNA (chromatin), facilitating transcription through the histone barrier. Stimulation depends on transcript cleavage. In the presence of TFS, the cleavage activity of RNAP truncates RNA back to position +15 in a stepwise manner by releasing mainly dinucleotides from the 3'-end of the nascent RNA. The truncated RNAs are able to continue elongation. Misincorporation of nucleotides during elongation of transcription leads to arrested elongation complexes which are rescued by TFS-promoted removal of a dinucleotide from the 3'-end. TFS is able to induce a cleavage resynthesis cycle in stalled elongation complexes (resulting from the next missing nucleotide or a reduced incorporation rate of a wrong nucleotide) preventing misincorporation and enabling proofreading in a post-incorporation manner. Pausing of elongation complexes is the main determinant of TFS-induced RNA cleavage. The chain is Transcription factor S from Thermococcus kodakarensis (strain ATCC BAA-918 / JCM 12380 / KOD1) (Pyrococcus kodakaraensis (strain KOD1)).